The chain runs to 476 residues: MAIKFLEVIKPFCAVLPEIQKPERKIQFREKVLWTAITLFIFLVCCQIPLFGIMSSDSADPFYWMRVILASNRGTLMELGISPIVTSGLIMQLLAGAKIIEVGDTPKDRALFNGAQKLFGMIITIGQAIVYVMTGMYGDPSEMGAGICLLIIIQLFVAGLIVLLLDELLQKGYGLGSGISLFIATNICETIVWKAFSPTTVNTGRGTEFEGAIIALFHLLATRTDKVRALREAFYRQNLPNLMNLIATVFVFAVVIYFQGFRVDLPIKSARYRGQYNTYPIKLFYTSNIPIILQSALVSNLYVISQMLSTRFSGNFLVNLLGTWSDTSSGGPARAYPVGGLCYYLSPPESFGSVLDDPVHAVIYIVFMLGSCAFFSKTWIEVSGSSAKDVAKQLKEQQMVMRGHRETSMVHELNRYIPTAAAFGGLCIGGLSVMADFLGAIGSGTGILLAVTIIYQYFEIFVKEQSEVGSMGALLF.

Residues 2 to 33 (AIKFLEVIKPFCAVLPEIQKPERKIQFREKVL) are Cytoplasmic-facing. The chain crosses the membrane as a helical span at residues 34–53 (WTAITLFIFLVCCQIPLFGI). The Lumenal segment spans residues 54–76 (MSSDSADPFYWMRVILASNRGTL). A helical transmembrane segment spans residues 77-96 (MELGISPIVTSGLIMQLLAG). Residues 97–117 (AKIIEVGDTPKDRALFNGAQK) lie on the Cytoplasmic side of the membrane. A helical transmembrane segment spans residues 118–138 (LFGMIITIGQAIVYVMTGMYG). Residues 139–144 (DPSEMG) are Lumenal-facing. A helical transmembrane segment spans residues 145–165 (AGICLLIIIQLFVAGLIVLLL). The Cytoplasmic segment spans residues 166–172 (DELLQKG). A helical membrane pass occupies residues 173–193 (YGLGSGISLFIATNICETIVW). At 194–240 (KAFSPTTVNTGRGTEFEGAIIALFHLLATRTDKVRALREAFYRQNLP) the chain is on the lumenal side. A helical transmembrane segment spans residues 241–261 (NLMNLIATVFVFAVVIYFQGF). At 262–288 (RVDLPIKSARYRGQYNTYPIKLFYTSN) the chain is on the cytoplasmic side. Residues 289 to 309 (IPIILQSALVSNLYVISQMLS) form a helical membrane-spanning segment. Topologically, residues 310–354 (TRFSGNFLVNLLGTWSDTSSGGPARAYPVGGLCYYLSPPESFGSV) are lumenal. Residues 355 to 375 (LDDPVHAVIYIVFMLGSCAFF) traverse the membrane as a helical segment. Over 376–420 (SKTWIEVSGSSAKDVAKQLKEQQMVMRGHRETSMVHELNRYIPTA) the chain is Cytoplasmic. The helical transmembrane segment at 421–441 (AAFGGLCIGGLSVMADFLGAI) threads the bilayer. Topologically, residues 442-445 (GSGT) are lumenal. Residues 446 to 462 (GILLAVTIIYQYFEIFV) traverse the membrane as a helical segment. Over 463–476 (KEQSEVGSMGALLF) the chain is Cytoplasmic.

This sequence belongs to the SecY/SEC61-alpha family. The SEC61 channel-forming translocon complex consists of channel-forming core components SEC61A1, SEC61B and SEC61G and different auxiliary components such as SEC62 and SEC63. The SEC61 channel associates with the multi-pass translocon (MPT) complex.

It is found in the endoplasmic reticulum membrane. Its function is as follows. Component of SEC61 channel-forming translocon complex that mediates transport of signal peptide-containing precursor polypeptides across the endoplasmic reticulum (ER). Forms a ribosome receptor and a gated pore in the ER membrane, both functions required for cotranslational translocation of nascent polypeptides. May cooperate with auxiliary protein SEC62, SEC63 and HSPA5/BiP to enable post-translational transport of small presecretory proteins. The SEC61 channel is also involved in ER membrane insertion of transmembrane proteins: it mediates membrane insertion of the first few transmembrane segments of proteins, while insertion of subsequent transmembrane regions of multi-pass membrane proteins is mediated by the multi-pass translocon (MPT) complex. Plays a role in the pronephric kidney tubule development. The protein is Protein transport protein Sec61 subunit alpha-like 1 (sec61al1) of Danio rerio (Zebrafish).